We begin with the raw amino-acid sequence, 415 residues long: Gamma-glutamyl phosphate reductase (415 aa).

Belongs to the gamma-glutamyl phosphate reductase family.

The protein localises to the cytoplasm. The enzyme catalyses L-glutamate 5-semialdehyde + phosphate + NADP(+) = L-glutamyl 5-phosphate + NADPH + H(+). The protein operates within amino-acid biosynthesis; L-proline biosynthesis; L-glutamate 5-semialdehyde from L-glutamate: step 2/2. Catalyzes the NADPH-dependent reduction of L-glutamate 5-phosphate into L-glutamate 5-semialdehyde and phosphate. The product spontaneously undergoes cyclization to form 1-pyrroline-5-carboxylate. The polypeptide is Gamma-glutamyl phosphate reductase (Cutibacterium acnes (strain DSM 16379 / KPA171202) (Propionibacterium acnes)).